The primary structure comprises 362 residues: Peptide chain release factor 1 (362 aa).

Residue Gln240 is modified to N5-methylglutamine.

It belongs to the prokaryotic/mitochondrial release factor family. Methylated by PrmC. Methylation increases the termination efficiency of RF1.

It localises to the cytoplasm. Functionally, peptide chain release factor 1 directs the termination of translation in response to the peptide chain termination codons UAG and UAA. The protein is Peptide chain release factor 1 of Bifidobacterium longum subsp. infantis (strain ATCC 15697 / DSM 20088 / JCM 1222 / NCTC 11817 / S12).